The following is a 159-amino-acid chain: Dihydrofolate reductase (159 aa).

The region spanning 2-157 (TLSILVAHDL…IPHTFLHLIR (156 aa)) is the DHFR domain. 6–8 (LVA) serves as a coordination point for substrate. Residues 7–8 (VA) and 15–20 (IGFENQ) contribute to the NADP(+) site. Position 28 (Asp28) interacts with substrate. 44–47 (GRKT) provides a ligand contact to NADP(+). Residue Arg58 participates in substrate binding. NADP(+)-binding positions include 63 to 66 (LTSD) and 93 to 98 (FGGQIL). Thr112 lines the substrate pocket.

This sequence belongs to the dihydrofolate reductase family.

It carries out the reaction (6S)-5,6,7,8-tetrahydrofolate + NADP(+) = 7,8-dihydrofolate + NADPH + H(+). It participates in cofactor biosynthesis; tetrahydrofolate biosynthesis; 5,6,7,8-tetrahydrofolate from 7,8-dihydrofolate: step 1/1. Key enzyme in folate metabolism. Catalyzes an essential reaction for de novo glycine and purine synthesis, and for DNA precursor synthesis. The sequence is that of Dihydrofolate reductase (folA) from Staphylococcus aureus (strain MW2).